Reading from the N-terminus, the 128-residue chain is 3-aminoacrylate deaminase RutC (128 aa).

Belongs to the RutC family.

It catalyses the reaction (Z)-3-aminoacrylate + H2O + H(+) = 3-oxopropanoate + NH4(+). Involved in pyrimidine catabolism. Catalyzes the deamination of 3-aminoacrylate to malonic semialdehyde, a reaction that can also occur spontaneously. RutC may facilitate the reaction and modulate the metabolic fitness, rather than catalyzing essential functions. This Pantoea ananatis (strain LMG 20103) protein is 3-aminoacrylate deaminase RutC.